The sequence spans 134 residues: Small ribosomal subunit protein bS16 (134 aa).

The segment at 79–134 (AGIAKRPSRNNPTKGEPGKKAQERLALAKQAEEEAAAKAAEAAAAAAAPAEEAASE) is disordered. Low complexity predominate over residues 115-134 (AKAAEAAAAAAAPAEEAASE).

This sequence belongs to the bacterial ribosomal protein bS16 family.

This Brucella suis (strain ATCC 23445 / NCTC 10510) protein is Small ribosomal subunit protein bS16.